The chain runs to 182 residues: Large ribosomal subunit protein uL5 (182 aa).

Belongs to the universal ribosomal protein uL5 family. In terms of assembly, part of the 50S ribosomal subunit; part of the 5S rRNA/L5/L18/L25 subcomplex. Contacts the 5S rRNA and the P site tRNA. Forms a bridge to the 30S subunit in the 70S ribosome.

In terms of biological role, this is one of the proteins that bind and probably mediate the attachment of the 5S RNA into the large ribosomal subunit, where it forms part of the central protuberance. In the 70S ribosome it contacts protein S13 of the 30S subunit (bridge B1b), connecting the 2 subunits; this bridge is implicated in subunit movement. Contacts the P site tRNA; the 5S rRNA and some of its associated proteins might help stabilize positioning of ribosome-bound tRNAs. The chain is Large ribosomal subunit protein uL5 from Leptospira interrogans serogroup Icterohaemorrhagiae serovar copenhageni (strain Fiocruz L1-130).